Here is a 699-residue protein sequence, read N- to C-terminus: Polyribonucleotide nucleotidyltransferase (699 aa).

The Mg(2+) site is built by D485 and D491. In terms of domain architecture, KH spans 552 to 611 (PRITTIKINPEKIRDVIGKGGAVIRALTEETGTTIELEDDGTVKIASSNGEATKEAIRRI). An S1 motif domain is found at 621-689 (GRIYNGKVIR…RQGRVRLSIK (69 aa)).

Belongs to the polyribonucleotide nucleotidyltransferase family. In terms of assembly, component of the RNA degradosome, which is a multiprotein complex involved in RNA processing and mRNA degradation. It depends on Mg(2+) as a cofactor.

It is found in the cytoplasm. It carries out the reaction RNA(n+1) + phosphate = RNA(n) + a ribonucleoside 5'-diphosphate. Its function is as follows. Involved in mRNA degradation. Catalyzes the phosphorolysis of single-stranded polyribonucleotides processively in the 3'- to 5'-direction. The polypeptide is Polyribonucleotide nucleotidyltransferase (Shewanella sp. (strain MR-7)).